The chain runs to 338 residues: Phenylalanine--tRNA ligase alpha subunit (338 aa).

Residue Glu-252 participates in Mg(2+) binding.

The protein belongs to the class-II aminoacyl-tRNA synthetase family. Phe-tRNA synthetase alpha subunit type 1 subfamily. As to quaternary structure, tetramer of two alpha and two beta subunits. The cofactor is Mg(2+).

It localises to the cytoplasm. The enzyme catalyses tRNA(Phe) + L-phenylalanine + ATP = L-phenylalanyl-tRNA(Phe) + AMP + diphosphate + H(+). The sequence is that of Phenylalanine--tRNA ligase alpha subunit from Pseudomonas fluorescens (strain SBW25).